The primary structure comprises 105 residues: Phosphoribosyl-AMP cyclohydrolase (105 aa).

Asp72 provides a ligand contact to Mg(2+). Cys73 contacts Zn(2+). Residues Asp74 and Asp76 each contribute to the Mg(2+) site. Cys89 and Cys96 together coordinate Zn(2+).

Belongs to the PRA-CH family. In terms of assembly, homodimer. Mg(2+) is required as a cofactor. The cofactor is Zn(2+).

It is found in the cytoplasm. It catalyses the reaction 1-(5-phospho-beta-D-ribosyl)-5'-AMP + H2O = 1-(5-phospho-beta-D-ribosyl)-5-[(5-phospho-beta-D-ribosylamino)methylideneamino]imidazole-4-carboxamide. The protein operates within amino-acid biosynthesis; L-histidine biosynthesis; L-histidine from 5-phospho-alpha-D-ribose 1-diphosphate: step 3/9. Catalyzes the hydrolysis of the adenine ring of phosphoribosyl-AMP. This is Phosphoribosyl-AMP cyclohydrolase from Listeria monocytogenes serotype 4a (strain HCC23).